We begin with the raw amino-acid sequence, 140 residues long: Large ribosomal subunit protein uL16 (140 aa).

The protein belongs to the universal ribosomal protein uL16 family. Part of the 50S ribosomal subunit.

In terms of biological role, binds 23S rRNA and is also seen to make contacts with the A and possibly P site tRNAs. The chain is Large ribosomal subunit protein uL16 from Trichlorobacter lovleyi (strain ATCC BAA-1151 / DSM 17278 / SZ) (Geobacter lovleyi).